A 116-amino-acid polypeptide reads, in one-letter code: Large-conductance mechanosensitive channel (116 aa).

The next 2 membrane-spanning stretches (helical) occupy residues 7 to 27 and 64 to 84; these read EFALKGNVLDLAIAVVMGAAF and GLFIQSIIDFIIIAFALFIFV.

It belongs to the MscL family. As to quaternary structure, homopentamer.

The protein resides in the cell membrane. Channel that opens in response to stretch forces in the membrane lipid bilayer. May participate in the regulation of osmotic pressure changes within the cell. The protein is Large-conductance mechanosensitive channel of Staphylococcus epidermidis (strain ATCC 35984 / DSM 28319 / BCRC 17069 / CCUG 31568 / BM 3577 / RP62A).